Reading from the N-terminus, the 250-residue chain is Ribosomal RNA small subunit methyltransferase J (250 aa).

S-adenosyl-L-methionine is bound by residues 96–97 (RD) and Asp168.

Belongs to the methyltransferase superfamily. RsmJ family.

The protein resides in the cytoplasm. It carries out the reaction guanosine(1516) in 16S rRNA + S-adenosyl-L-methionine = N(2)-methylguanosine(1516) in 16S rRNA + S-adenosyl-L-homocysteine + H(+). Functionally, specifically methylates the guanosine in position 1516 of 16S rRNA. This Neisseria gonorrhoeae (strain ATCC 700825 / FA 1090) protein is Ribosomal RNA small subunit methyltransferase J.